We begin with the raw amino-acid sequence, 261 residues long: Cytosolic Fe-S cluster assembly factor Nubp2 homolog (261 aa).

ATP is bound at residue 14 to 21; that stretch reads GKGGVGKS. Cys188 and Cys191 together coordinate [4Fe-4S] cluster.

This sequence belongs to the Mrp/NBP35 ATP-binding proteins family. NUBP2/CFD1 subfamily. In terms of assembly, heterotetramer of 2 Nubp1 and 2 Nubp2 chains. The cofactor is [4Fe-4S] cluster.

The protein resides in the cytoplasm. Its function is as follows. Component of the cytosolic iron-sulfur (Fe/S) protein assembly (CIA) machinery. Required for maturation of extramitochondrial Fe-S proteins. The Nubp1-Nubp2 heterotetramer forms a Fe-S scaffold complex, mediating the de novo assembly of an Fe-S cluster and its transfer to target apoproteins. The chain is Cytosolic Fe-S cluster assembly factor Nubp2 homolog from Drosophila ananassae (Fruit fly).